The sequence spans 1119 residues: Translation initiation factor IF-2 (1119 aa).

Disordered stretches follow at residues 64-463 (SIKK…TSGY) and 477-507 (RPKK…RQRQ). Residues 70 to 102 (IKKDNYKQNKEDKSSLISSVEEKPFKDNPEKKP) show a composition bias toward basic and acidic residues. Polar residues-rich tracts occupy residues 116 to 153 (IISN…QNLN) and 182 to 212 (KNTT…KPDQ). Over residues 213–224 (NSSKSKTKNINN) the composition is skewed to low complexity. 4 stretches are compositionally biased toward polar residues: residues 242 to 257 (NKQN…QTVP), 281 to 297 (FNRQ…SSNK), 319 to 328 (FNRQVNTNRS), and 375 to 387 (QVIN…NSET). Residues 421–435 (GKTDWDDSAKLEALR) are compositionally biased toward basic and acidic residues. The segment covering 493-507 (KQFKKKKKETTRQRQ) has biased composition (basic residues). Residues 610 to 782 (KRPPVITVMG…ILLVSEVEDL (173 aa)) enclose the tr-type G domain. Residues 619-626 (GHVDHGKT) are G1. 619–626 (GHVDHGKT) is a GTP binding site. A G2 region spans residues 644–648 (GITQH). The tract at residues 669–672 (DTPG) is G3. GTP-binding positions include 669–673 (DTPGH) and 723–726 (NKID). Residues 723 to 726 (NKID) form a G4 region. The tract at residues 759–761 (SAI) is G5.

This sequence belongs to the TRAFAC class translation factor GTPase superfamily. Classic translation factor GTPase family. IF-2 subfamily.

The protein resides in the cytoplasm. Functionally, one of the essential components for the initiation of protein synthesis. Protects formylmethionyl-tRNA from spontaneous hydrolysis and promotes its binding to the 30S ribosomal subunits. Also involved in the hydrolysis of GTP during the formation of the 70S ribosomal complex. The chain is Translation initiation factor IF-2 from Prochlorococcus marinus (strain MIT 9215).